Reading from the N-terminus, the 806-residue chain is ATP-dependent zinc metalloprotease FTSH 11, chloroplastic/mitochondrial (806 aa).

A chloroplast and mitochondrion-targeting transit peptide spans 1–63; sequence MSSSTLQASL…RFRPLPCSLR (63 aa). Residues 106 to 116 are compositionally biased toward basic and acidic residues; the sequence is FVGGEETKSGG. Positions 106–130 are disordered; sequence FVGGEETKSGGEEAEVSNGVTEGKE. The chain crosses the membrane as a helical span at residues 301–321; that stretch reads LVSTILFTVAVGLVWIMGAAA. 402-409 contacts ATP; sequence GAPGTGKT. Zn(2+) is bound at residue His-620. Glu-621 is a catalytic residue. Zn(2+)-binding residues include His-624 and Asp-698.

It in the N-terminal section; belongs to the AAA ATPase family. In the C-terminal section; belongs to the peptidase M41 family. Homooligomer. Zn(2+) is required as a cofactor.

It localises to the mitochondrion inner membrane. The protein localises to the plastid. Its subcellular location is the chloroplast thylakoid membrane. Its function is as follows. Probable ATP-dependent zinc metallopeptidase. Involved in the assembly and/or stability of the complexes I and V. Involved in thermotolerance but not in high light stress resistance or in the assembly/stability of the complexes I and V of the mitochondrial oxidative phosphorylation system. This chain is ATP-dependent zinc metalloprotease FTSH 11, chloroplastic/mitochondrial (FTSH11), found in Arabidopsis thaliana (Mouse-ear cress).